We begin with the raw amino-acid sequence, 228 residues long: tRNA (guanine-N(1)-)-methyltransferase (228 aa).

S-adenosyl-L-methionine-binding positions include Gly111 and 130–135 (IGDFVL).

It belongs to the RNA methyltransferase TrmD family. As to quaternary structure, homodimer.

It localises to the cytoplasm. It carries out the reaction guanosine(37) in tRNA + S-adenosyl-L-methionine = N(1)-methylguanosine(37) in tRNA + S-adenosyl-L-homocysteine + H(+). Specifically methylates guanosine-37 in various tRNAs. The chain is tRNA (guanine-N(1)-)-methyltransferase from Ureaplasma urealyticum serovar 10 (strain ATCC 33699 / Western).